A 235-amino-acid polypeptide reads, in one-letter code: STARD3 N-terminal-like protein (235 aa).

N-acetylmethionine is present on M1. The interval 1–20 is disordered; that stretch reads MNHLPEHMENTLTGSQSSHA. At 1-53 the chain is on the cytoplasmic side; the sequence is MNHLPEHMENTLTGSQSSHASLRDIHSINPAQLMARIESYEGREKKGISDVRR. The segment covering 10 to 20 has biased composition (polar residues); it reads NTLTGSQSSHA. Phosphoserine occurs at positions 15, 21, and 27. The MENTAL domain occupies 48-218; that stretch reads ISDVRRTFCL…YSPPESEAGS (171 aa). Residues 54–74 traverse the membrane as a helical segment; sequence TFCLFVTFDLLFVTLLWIIEL. The Extracellular portion of the chain corresponds to 75–97; the sequence is NVNGGIENTLKKEVIHYDYYSSY. A helical transmembrane segment spans residues 98-118; that stretch reads FDIFLLAVFRFKVLILGYAVC. Residues 119 to 122 lie on the Cytoplasmic side of the membrane; that stretch reads RLRH. Residues 123-143 traverse the membrane as a helical segment; it reads WWAIALTTAVTSAFLLAKVIL. Residues 144 to 150 are Extracellular-facing; that stretch reads SKLFSQG. A helical transmembrane segment spans residues 151-171; sequence AFGYVLPIISFILAWIETWFL. Residues 172–235 are Cytoplasmic-facing; that stretch reads DFKVLPQEAE…QESEKPLLEL (64 aa). The residue at position 193 (S193) is a Phosphoserine. Residues 202 to 235 form a disordered region; that stretch reads GLSDGQFYSPPESEAGSEEEAEEKQESEKPLLEL. The FFAT motif lies at 208 to 213; the sequence is FYSPPE. The segment covering 225–235 has biased composition (basic and acidic residues); that stretch reads KQESEKPLLEL.

The protein belongs to the STARD3 family. Homodimer. Interacts (via the MENTAL domain) with STARD3NL. Interacts (via FFAT motif) with VAPA. Interacts (via FFAT motif) with VAPB. Interacts (via FFAT motif) with MOSPD2 (via MSP domain).

It localises to the late endosome membrane. Tethering protein that creates contact site between the endoplasmic reticulum and late endosomes: localizes to late endosome membranes and contacts the endoplasmic reticulum via interaction with VAPA and VAPB. The chain is STARD3 N-terminal-like protein from Mus musculus (Mouse).